The following is a 534-amino-acid chain: Protoheme IX farnesyltransferase (534 aa).

Residues 1-251 (MRREHARAIL…VLLEGKPSLL (251 aa)) are unknown. 15 helical membrane-spanning segments follow: residues 17–37 (PWLL…GGIV), 39–59 (ALTG…ALAI), 83–103 (YLTL…FGAI), 128–148 (LALA…ALAV), 163–183 (VAWA…QVLL), 197–217 (LMHL…TTLA), 261–281 (GVIS…PAGI), 284–304 (LSLV…SHSI), 339–359 (IALG…LAAI), 360–380 (LALA…KRTS), 384–404 (IVIG…AVTG), 411–431 (LLLW…LALI), 457–477 (IVIY…LGML), 479–499 (WAYL…ALKL), and 508–528 (AWAL…AMAV). Residues 252-530 (KDYISLTKPG…ILFVAMAVDR (279 aa)) form a protoheme IX prenyltransferase region.

The protein in the C-terminal section; belongs to the UbiA prenyltransferase family. Protoheme IX farnesyltransferase subfamily.

The protein localises to the cell membrane. It carries out the reaction heme b + (2E,6E)-farnesyl diphosphate + H2O = Fe(II)-heme o + diphosphate. The protein operates within porphyrin-containing compound metabolism; heme O biosynthesis; heme O from protoheme: step 1/1. Converts heme B (protoheme IX) to heme O by substitution of the vinyl group on carbon 2 of heme B porphyrin ring with a hydroxyethyl farnesyl side group. The sequence is that of Protoheme IX farnesyltransferase (ctaB) from Roseiflexus sp. (strain RS-1).